The chain runs to 591 residues: Zinc finger protein 48 (591 aa).

Met-1 carries the N-acetylmethionine modification. Disordered regions lie at residues 1–24 (MEAS…IKEE) and 55–80 (GLGK…GSND). 2 stretches are compositionally biased toward basic and acidic residues: residues 8-24 (EFEH…IKEE) and 55-65 (GLGKRQPRDPV). Ser-12 carries the phosphoserine modification. Residue Lys-58 forms a Glycyl lysine isopeptide (Lys-Gly) (interchain with G-Cter in SUMO2) linkage. 2 consecutive C2H2-type zinc fingers follow at residues 83–105 (AVCG…QRTH) and 111–133 (YKCG…QRTH). The tract at residues 131-160 (RTHTGEKAYRVRPPAPGPPKMPRSRIPAGE) is disordered. Lys-150 is covalently cross-linked (Glycyl lysine isopeptide (Lys-Gly) (interchain with G-Cter in SUMO2)). 2 consecutive C2H2-type zinc fingers follow at residues 163-185 (TICG…QRTH) and 191-213 (YKCG…QRTH). Positions 206 to 241 (RIKHQRTHRGDQLPRPVVPRRQPSPAAPAAPHRPKA) are disordered. The segment covering 224-235 (PRRQPSPAAPAA) has biased composition (low complexity). Lys-240 is covalently cross-linked (Glycyl lysine isopeptide (Lys-Gly) (interchain with G-Cter in SUMO2)). C2H2-type zinc fingers lie at residues 246 to 268 (YICT…QRSH) and 274 to 296 (FGCD…LRVH). Lys-300 is covalently cross-linked (Glycyl lysine isopeptide (Lys-Gly) (interchain with G-Cter in SUMO2)). 2 C2H2-type zinc fingers span residues 302–324 (YLCP…LRTH) and 330–352 (HACP…RLTH). The interval 372–429 (PPPPPLGTSPSLTPRSPSHSSDGPFGLPGLEPEPGGPQAGEPPPPLAGDKPHKCPECG) is disordered. Positions 379 to 404 (TSPSLTPRSPSHSSDGPFGLPGLEPE) are enriched in low complexity. The C2H2-type 9 zinc-finger motif lies at 423-445 (HKCPECGKGFRRSSDLVKHHRVH). Lys-449 participates in a covalent cross-link: Glycyl lysine isopeptide (Lys-Gly) (interchain with G-Cter in SUMO2). The segment at 451–473 (YLCPECGKGFADSSARVKHLRTH) adopts a C2H2-type 10 zinc-finger fold. Residues 464-512 (SARVKHLRTHQGERTRPPPPPSTLLRPHNPPGSVPIVPQSRVQGRPSGP) are disordered. Residues 480–496 (PPPPPSTLLRPHNPPGS) are compositionally biased toward pro residues. 2 consecutive C2H2-type zinc fingers follow at residues 516-538 (HVCG…RRTH) and 544-566 (YKCA…QRGH). The interval 564–591 (RGHLALKPFGVGDGPPRPLKEESPAGLE) is disordered. The segment covering 581 to 591 (PLKEESPAGLE) has biased composition (basic and acidic residues). Lys-583 is covalently cross-linked (Glycyl lysine isopeptide (Lys-Gly) (interchain with G-Cter in SUMO2)).

The protein belongs to the krueppel C2H2-type zinc-finger protein family.

The protein localises to the nucleus. Functionally, may be involved in transcriptional regulation. The protein is Zinc finger protein 48 (Znf48) of Mus musculus (Mouse).